The primary structure comprises 208 residues: Anti-sigma-W factor RsiW (208 aa).

Residues 1–87 are Cytoplasmic-facing; the sequence is MSCPEQIVQL…ASVKRWFRTH (87 aa). The Zn(2+) site is built by cysteine 3, histidine 30, cysteine 34, and cysteine 37. A helical transmembrane segment spans residues 88 to 108; it reads PVIAAAAVFIILMGGGFFNSW. Topologically, residues 109-208 are extracellular; the sequence is HNDHNFSVSK…LDAFNPNGEE (100 aa).

This sequence belongs to the zinc-associated anti-sigma factor (ZAS) superfamily. Anti-sigma-W factor family. As to quaternary structure, forms a heterodimer with cognate sigma factor SigW, which probably prevents SigW from binding to DNA. Zn(2+) is required as a cofactor. Is processed by successive proteolytic events. First, the extracellular region of RsiW is cleaved by PrsW (site-1 cleavage) in response to cell envelope stresses. In a reconstituted E.coli system PrsW cuts between Ala-168 and Ser-169 followed by trimming by E.coli Tsp; the endogenous extracellular exopeptidase responsible for the event in B.subtilis has not been identified. Next, it undergoes cleavage at an intramembrane site (site-2 cleavage) mediated by RasP. This cleavage uncovers a cryptic proteolytic tag with conserved alanine residues in the transmembrane segment, that is recognized mainly by the ClpXP protease, which completely degrades the protein in the cytoplasm and leads to the induction of the sigma-W-controlled genes.

The protein resides in the cell membrane. Its function is as follows. The anti-sigma factor for extracytoplasmic function (ECF) sigma factor sigma-W (SigW). Holds SigW, its cognate ECF sigma factor, in an inactive form until released by regulated intramembrane proteolysis (RIP). SigW and RsiW mediate cell response to cell wall stress. RIP occurs when an extracytoplasmic signal triggers a concerted proteolytic cascade to transmit information and elicit cellular responses. The membrane-spanning regulatory substrate protein is first cut periplasmically (site-1 protease, S1P, PrsW), then within the membrane itself (site-2 protease, S2P, RasP), while cytoplasmic proteases finish degrading the anti-sigma factor, liberating sigma-W. The sequence is that of Anti-sigma-W factor RsiW (rsiW) from Bacillus subtilis (strain 168).